The sequence spans 416 residues: Tyrosine--tRNA ligase (416 aa).

Position 41 (Tyr-41) interacts with L-tyrosine. A 'HIGH' region motif is present at residues 46–55 (ATASSLHAGH). L-tyrosine is bound by residues Tyr-175 and Gln-179. The short motif at 235-239 (KMGKT) is the 'KMSKS' region element. Residue Lys-238 participates in ATP binding. Residues 349 to 416 (LPVAKAFVDA…KKKHVLLKPV (68 aa)) form the S4 RNA-binding domain.

Belongs to the class-I aminoacyl-tRNA synthetase family. TyrS type 1 subfamily. As to quaternary structure, homodimer.

It localises to the cytoplasm. It catalyses the reaction tRNA(Tyr) + L-tyrosine + ATP = L-tyrosyl-tRNA(Tyr) + AMP + diphosphate + H(+). Catalyzes the attachment of tyrosine to tRNA(Tyr) in a two-step reaction: tyrosine is first activated by ATP to form Tyr-AMP and then transferred to the acceptor end of tRNA(Tyr). The sequence is that of Tyrosine--tRNA ligase from Xanthobacter autotrophicus (strain ATCC BAA-1158 / Py2).